Reading from the N-terminus, the 330-residue chain is MTLQHKLTQFPRLDLVGNATPLEKLSRLSDYLGREIYIKRDDVTPVALGGNKLRKLEFLAADALRQGADTLVTAGAIQSNHVRQTAAVAAKLGLHCVALLENPIGTEQANYLTNGNRLLLDLFNVDVVMCEALNDPNQQLAELATRVEAQGFRPYVVPIGGSNALGALGYVQCSLEIAAQAAGNVAFSSVVVASGSAGTHAGLAVGLQQLLPDAELIGVTVSRSADEQRPKVAQIQQALATSLGMTDPLAKITLWDSYFAPQYGMPNEEGIAAIKLLARLEGILLDPVYTGKAMAGLLDGIEQQKFCDKGPILFIHTGGAPALFAYHPQV.

K52 carries the post-translational modification N6-(pyridoxal phosphate)lysine.

It belongs to the ACC deaminase/D-cysteine desulfhydrase family. In terms of assembly, homodimer. Pyridoxal 5'-phosphate serves as cofactor.

It catalyses the reaction D-cysteine + H2O = hydrogen sulfide + pyruvate + NH4(+) + H(+). Catalyzes the alpha,beta-elimination reaction of D-cysteine and of several D-cysteine derivatives. It could be a defense mechanism against D-cysteine. This chain is D-cysteine desulfhydrase, found in Yersinia pseudotuberculosis serotype O:1b (strain IP 31758).